A 464-amino-acid polypeptide reads, in one-letter code: Desmin (464 aa).

Serine 2 carries the post-translational modification Blocked amino end (Ser). A head region spans residues serine 2–glutamate 100. Phosphoserine; by CDK1 occurs at positions 7 and 23. Threonine 65 bears the Phosphothreonine; by CDK1 mark. The 309-residue stretch at glutamate 100–isoleucine 408 folds into the IF rod domain. A coil 1A region spans residues lysine 101–asparagine 133. The interval arginine 134–valine 143 is linker 1. The coil 1B stretch occupies residues alanine 144–alanine 244. A linker 12 region spans residues glutamine 245–proline 260. Positions aspartate 261 to lysine 279 are coil 2A. Residues asparagine 280–tryptophan 287 are linker 2. The interval tyrosine 288–glutamate 404 is coil 2B. The segment at glutamate 405–leucine 464 is tail.

It belongs to the intermediate filament family. Homomer.

Its subcellular location is the cytoplasm. It localises to the myofibril. The protein resides in the sarcomere. It is found in the z line. The protein localises to the cell membrane. Its subcellular location is the sarcolemma. Functionally, muscle-specific type III intermediate filament essential for proper muscular structure and function. Plays a crucial role in maintaining the structure of sarcomeres, inter-connecting the Z-disks and forming the myofibrils, linking them not only to the sarcolemmal cytoskeleton, but also to the nucleus and mitochondria, thus providing strength for the muscle fiber during activity. In adult striated muscle they form a fibrous network connecting myofibrils to each other and to the plasma membrane from the periphery of the Z-line structures. This chain is Desmin (DES), found in Gallus gallus (Chicken).